The sequence spans 74 residues: Defensin-like protein 39 (74 aa).

The N-terminal stretch at 1 to 28 is a signal peptide; the sequence is MEKKSLAALSFLLLLVLFVAQEIVVTEA. Intrachain disulfides connect cysteine 31-cysteine 74, cysteine 42-cysteine 63, cysteine 48-cysteine 68, and cysteine 52-cysteine 70.

It belongs to the DEFL family. Pods.

The protein localises to the secreted. Possesses antifungal activity. The sequence is that of Defensin-like protein 39 (PI39) from Pisum sativum (Garden pea).